A 192-amino-acid chain; its full sequence is Probable chorismate pyruvate-lyase (192 aa).

Positions 85, 120, and 176 each coordinate substrate.

This sequence belongs to the UbiC family.

The protein localises to the cytoplasm. It carries out the reaction chorismate = 4-hydroxybenzoate + pyruvate. The protein operates within cofactor biosynthesis; ubiquinone biosynthesis. Removes the pyruvyl group from chorismate, with concomitant aromatization of the ring, to provide 4-hydroxybenzoate (4HB) for the ubiquinone pathway. The polypeptide is Probable chorismate pyruvate-lyase (Pseudoalteromonas atlantica (strain T6c / ATCC BAA-1087)).